The following is a 43-amino-acid chain: Potassium channel toxin gamma-KTx 4.6 (43 aa).

Disulfide bonds link Cys-5–Cys-23, Cys-11–Cys-34, Cys-20–Cys-39, and Cys-24–Cys-41.

Belongs to the ergtoxin family. Gamma-KTx 4 subfamily. In terms of tissue distribution, expressed by the venom gland.

The protein resides in the secreted. Its function is as follows. Reversibly blocks Kv11/ERG potassium channels. The chain is Potassium channel toxin gamma-KTx 4.6 from Centruroides limpidus (Mexican scorpion).